Here is a 126-residue protein sequence, read N- to C-terminus: Penton protein P31 (126 aa).

Its subcellular location is the virion. In association with P2 and trimeric P5, forms the spike complexes located at the 5-fold vertices of the capsid. Essential for viral infectivity. The polypeptide is Penton protein P31 (XXXI) (Acinetobacter calcoaceticus (Arthrobacter siderocapsulatus)).